The following is a 72-amino-acid chain: Teretoxin Tan11.1 (72 aa).

Positions 1–21 (MLATKMSVTFCFLLMLTTVML) are cleaved as a signal peptide. A propeptide spanning residues 22–31 (PTEAKTVAGR) is cleaved from the precursor.

It belongs to the teretoxin H (TH) superfamily. Post-translationally, contains 4 disulfide bonds. As to expression, expressed by the venom duct.

It localises to the secreted. This is Teretoxin Tan11.1 from Terebra anilis (Auger snail).